The following is a 234-amino-acid chain: Large ribosomal subunit protein uL1 (234 aa).

Belongs to the universal ribosomal protein uL1 family. As to quaternary structure, part of the 50S ribosomal subunit.

Functionally, binds directly to 23S rRNA. The L1 stalk is quite mobile in the ribosome, and is involved in E site tRNA release. Its function is as follows. Protein L1 is also a translational repressor protein, it controls the translation of the L11 operon by binding to its mRNA. This chain is Large ribosomal subunit protein uL1, found in Bdellovibrio bacteriovorus (strain ATCC 15356 / DSM 50701 / NCIMB 9529 / HD100).